A 251-amino-acid chain; its full sequence is Hydroxyacylglutathione hydrolase (251 aa).

Zn(2+) contacts are provided by His53, His55, Asp57, His58, His110, Asp127, and His165.

Belongs to the metallo-beta-lactamase superfamily. Glyoxalase II family. In terms of assembly, monomer. Zn(2+) is required as a cofactor.

The enzyme catalyses an S-(2-hydroxyacyl)glutathione + H2O = a 2-hydroxy carboxylate + glutathione + H(+). It functions in the pathway secondary metabolite metabolism; methylglyoxal degradation; (R)-lactate from methylglyoxal: step 2/2. Its function is as follows. Thiolesterase that catalyzes the hydrolysis of S-D-lactoyl-glutathione to form glutathione and D-lactic acid. The polypeptide is Hydroxyacylglutathione hydrolase (Serratia proteamaculans (strain 568)).